We begin with the raw amino-acid sequence, 257 residues long: Achaete-scute complex protein T3 (257 aa).

In terms of domain architecture, bHLH spans 83 to 145 (PSVARRNARE…RIAVEYIRGL (63 aa)). The interval 161-221 (YNSADESSND…SEISGGGYIK (61 aa)) is disordered. 2 stretches are compositionally biased toward low complexity: residues 165 to 184 (DESS…LDSS) and 193 to 213 (QSAQ…SGSE).

As to quaternary structure, efficient DNA binding requires dimerization with another bHLH protein. In terms of tissue distribution, l(1)SC, SC and AC strongly label the presumptive stomatogastric nervous system, while ASE is more prominent in the presumptive procephalic lobe.

Functionally, AS-C proteins are involved in the determination of the neuronal precursors in the peripheral nervous system and the central nervous system. This is Achaete-scute complex protein T3 (l(1)sc) from Drosophila melanogaster (Fruit fly).